A 66-amino-acid polypeptide reads, in one-letter code: Small ribosomal subunit protein bS21 (66 aa).

It belongs to the bacterial ribosomal protein bS21 family.

This is Small ribosomal subunit protein bS21 from Rickettsia typhi (strain ATCC VR-144 / Wilmington).